Consider the following 193-residue polypeptide: ATP-dependent Clp protease proteolytic subunit (193 aa).

Serine 98 serves as the catalytic Nucleophile. Histidine 123 is an active-site residue.

The protein belongs to the peptidase S14 family. Fourteen ClpP subunits assemble into 2 heptameric rings which stack back to back to give a disk-like structure with a central cavity, resembling the structure of eukaryotic proteasomes.

The protein resides in the cytoplasm. The catalysed reaction is Hydrolysis of proteins to small peptides in the presence of ATP and magnesium. alpha-casein is the usual test substrate. In the absence of ATP, only oligopeptides shorter than five residues are hydrolyzed (such as succinyl-Leu-Tyr-|-NHMec, and Leu-Tyr-Leu-|-Tyr-Trp, in which cleavage of the -Tyr-|-Leu- and -Tyr-|-Trp bonds also occurs).. Functionally, cleaves peptides in various proteins in a process that requires ATP hydrolysis. Has a chymotrypsin-like activity. Plays a major role in the degradation of misfolded proteins. This Lachnospira eligens (strain ATCC 27750 / DSM 3376 / VPI C15-48 / C15-B4) (Eubacterium eligens) protein is ATP-dependent Clp protease proteolytic subunit.